Here is a 374-residue protein sequence, read N- to C-terminus: tRNA-specific 2-thiouridylase MnmA (374 aa).

Residues 17–24 (GMSGGVDS) and Met-43 each bind ATP. The interaction with target base in tRNA stretch occupies residues 103–105 (NPD). Cys-108 serves as the catalytic Nucleophile. Residues Cys-108 and Cys-204 are joined by a disulfide bond. Residue Gly-132 participates in ATP binding. Residues 154–156 (KDQ) form an interaction with tRNA region. Cys-204 (cysteine persulfide intermediate) is an active-site residue. The tract at residues 316-317 (RY) is interaction with tRNA.

It belongs to the MnmA/TRMU family.

The protein localises to the cytoplasm. The catalysed reaction is S-sulfanyl-L-cysteinyl-[protein] + uridine(34) in tRNA + AH2 + ATP = 2-thiouridine(34) in tRNA + L-cysteinyl-[protein] + A + AMP + diphosphate + H(+). Catalyzes the 2-thiolation of uridine at the wobble position (U34) of tRNA, leading to the formation of s(2)U34. The sequence is that of tRNA-specific 2-thiouridylase MnmA from Pseudomonas fluorescens (strain SBW25).